The chain runs to 289 residues: Pteridine reductase 1 (289 aa).

14-41 lines the NADP(+) pocket; sequence GAAKRLGSSIAEALHAEGYTVCLHYHRS. Serine 176 lines the substrate pocket. Catalysis depends on tyrosine 195, which acts as the Proton acceptor. 195-199 is a binding site for NADP(+); that stretch reads YTMAK.

Belongs to the short-chain dehydrogenases/reductases (SDR) family. Homotetramer.

It catalyses the reaction (6R)-L-erythro-5,6,7,8-tetrahydrobiopterin + 2 NADP(+) = L-erythro-biopterin + 2 NADPH + 2 H(+). It functions in the pathway cofactor biosynthesis; tetrahydrobiopterin biosynthesis; tetrahydrobiopterin from biopterin: step 1/1. Its function is as follows. Exhibits a NADPH-dependent biopterin reductase activity. Has good activity with folate and significant activity with dihydrofolate and dihydrobiopterin, but not with quinonoid dihydrobiopterin. Confers resistance to methotrexate (MTX). This Leishmania tarentolae (Sauroleishmania tarentolae) protein is Pteridine reductase 1 (PTR1).